We begin with the raw amino-acid sequence, 294 residues long: MSEQRRATTHLIGGFSGGLVSAIILQPFDLLKTRLQQDKTSTLWKTLKSIETPSQLWRGALPSCIRTSVGSAMYLTMLNSIRQAISKGKNTGSTGSSYLPQLNMYENMFSGAVTRALTGLITMPITVIKVRYESTLYQYTSLRYATSHIFRTEGLRGFFRGFGATALRDAPYAGLYMLFYDRMKVLVPTLLPSNVVKLNSDNRYSTYASTLINGSSAFSAAVIATSITAPFDTVKTRMQLEPAKFHSFTSTFWHIATKESVRNLFAGISLRLTRKAFSAGIAWGIYEEIVKKFV.

3 Solcar repeats span residues 5–84, 102–186, and 208–292; these read RRAT…IRQA, LNMY…MKVL, and ASTL…IVKK. A run of 6 helical transmembrane segments spans residues 11–36, 59–85, 108–133, 161–184, 212–238, and 267–285; these read LIGG…TRLQ, GALP…RQAI, MFSG…VRYE, GFGA…DRMK, INGS…KTRM, and GISL…AWGI.

The protein belongs to the mitochondrial carrier (TC 2.A.29) family. SLC25A38 subfamily.

The protein localises to the mitochondrion inner membrane. The catalysed reaction is glycine(in) = glycine(out). In terms of biological role, mitochondrial glycine transporter that imports glycine into the mitochondrial matrix. Plays an important role in providing glycine for the first enzymatic step in heme biosynthesis, the condensation of glycine with succinyl-CoA to produce 5-aminolevulinate (ALA) in the mitochondrial matrix. The chain is Mitochondrial glycine transporter from Kluyveromyces lactis (strain ATCC 8585 / CBS 2359 / DSM 70799 / NBRC 1267 / NRRL Y-1140 / WM37) (Yeast).